We begin with the raw amino-acid sequence, 401 residues long: Transcriptional regulator Myc-2 (401 aa).

O-linked (GlcNAc) threonine glycosylation occurs at threonine 58. A 9aaTAD motif is present at residues 76–84; that stretch reads EMVSEFLGD. Disordered regions lie at residues 177–251 and 286–325; these read SSKS…SRYP and LESS…HNVL. Over residues 205-230 the composition is skewed to acidic residues; sequence DSEDEEEEEEEEEEEEEEEEEEEEID. Basic and acidic residues predominate over residues 233 to 247; sequence TVEKRQKRNEAEVSD. The span at 288–297 shows a compositional bias: low complexity; that stretch reads SSSSNNSSSN. A bHLH domain is found at 317–369; sequence DKRRTHNVLERQRRNELKLSFFALRDEIPEVANNEKAAKVVILKKATECIHSM. The segment at 376–397 is leucine-zipper; the sequence is LLSIKEQLRRKSEQLKHRLQQL.

In terms of assembly, efficient DNA binding requires dimerization with another bHLH protein. Binds DNA as a heterodimer with MAX.

The protein resides in the nucleus. In terms of biological role, transcription factor that binds DNA in a non-specific manner, yet also specifically recognizes the core sequence 5'-CAC[GA]TG-3'. Activates the transcription of growth-related genes. The polypeptide is Transcriptional regulator Myc-2 (mycb) (Cyprinus carpio (Common carp)).